Consider the following 470-residue polypeptide: Sorting nexin-17 (470 aa).

The 109-residue stretch at 1-109 (MHFSIPETES…SFLRRAQQET (109 aa)) folds into the PX domain. Residues R36, S38, K62, and R75 each contribute to the a 1,2-diacyl-sn-glycero-3-phospho-(1D-myo-inositol-3-phosphate) site. Residues 115–206 (EEVSLEVLLS…YKIVLRKSYW (92 aa)) enclose the Ras-associating domain. Residues 115 to 432 (EEVSLEVLLS…DASRESMVKL (318 aa)) form an FERM-like region. The tract at residues 270–432 (GYLRFDACVA…DASRESMVKL (163 aa)) is PTB-like F3 module. A phosphoserine mark is found at S336, S407, S409, S415, S421, S437, and S440. The tract at residues 400 to 426 (VGGTLRRSDSQQAVKSPPLLESPDASR) is disordered.

The protein belongs to the sorting nexin family. In terms of assembly, monomer. Interacts with APP (via cytoplasmic YXNPXY motif). Interacts with KIF1B. Interacts with the C-termini of P-selectin, PTC, LDLR, VLDLR, LRP1 and LRP8. Interacts with KRIT1 (via N-terminus). Interacts with HRAS. Interacts with ITGB1 and ITGB5 (via NPxY motif). Interacts with CCDC22 and CCDC93; the interaction associates SNX17 with the CCC complex. Interacts (via C-terminus) with VPS26C and VPS35L; the interactions are direct and associate SNX17 with the retriever complex.

The protein resides in the cytoplasm. Its subcellular location is the early endosome. The protein localises to the cytoplasmic vesicle membrane. In terms of biological role, critical regulator of endosomal recycling of numerous surface proteins, including integrins, signaling receptor and channels. Binds to NPxY sequences in the cytoplasmic tails of target cargos. Associates with retriever and CCC complexes to prevent lysosomal degradation and promote cell surface recycling of numerous cargos such as integrins ITGB1, ITGB5 and their associated alpha subunits. Also required for maintenance of normal cell surface levels of APP and LRP1. Interacts with membranes containing phosphatidylinositol 3-phosphate (PtdIns(3P)). The polypeptide is Sorting nexin-17 (SNX17) (Bos taurus (Bovine)).